The sequence spans 208 residues: Adapter protein MecA (208 aa).

The protein belongs to the MecA family. As to quaternary structure, homodimer.

Its function is as follows. Enables the recognition and targeting of unfolded and aggregated proteins to the ClpC protease or to other proteins involved in proteolysis. The protein is Adapter protein MecA of Exiguobacterium sibiricum (strain DSM 17290 / CCUG 55495 / CIP 109462 / JCM 13490 / 255-15).